We begin with the raw amino-acid sequence, 435 residues long: Prenyltransferase nanD (435 aa).

Glu101 serves as a coordination point for substrate. Dimethylallyl diphosphate contacts are provided by Arg114, Lys202, and Tyr204. Tyr206 lines the substrate pocket. Dimethylallyl diphosphate is bound by residues Lys280, Tyr282, Tyr364, Tyr429, and Tyr433.

This sequence belongs to the tryptophan dimethylallyltransferase family.

It functions in the pathway secondary metabolite biosynthesis. Its function is as follows. Prenyltransferase; part of the gene cluster that mediates the biosynthesis of the benzazepine alkaloid nanangelenin A which contains an unprecedented 3,4-dihydro-1-benzazepine-2,5-dione-N-prenyl-N-acetoxy-anthranilamide scaffold. The first step of nanangelenin biosynthesis is catalyzed by the indoleamine 2,3-dioxygenase nanC which produces N-formyl-kynurenine through the catabolism of tryptophan. The two-module NRPS nanA then utilizes anthranilate (Ant) and L-kynurenine (L-Kyn) to assemble the dipeptide product nanangelenin B. The first adenylation domain of nanA (A1) loads anthranilate onto the T1 domain, while A2 loads kynurenine, generated through spontaneous nonenzymatic deformylation of the nanC-supplied N-formyl-kynurenine. The peptide bond formation between the tethered amino acids is catalyzed by the first condensation domain (C1) between anthranilate's carbonyl carbon and kynurenine's aliphatic primary amine. The second C domain (C2) catalyzes the final cyclization event between the aromatic amine of kynurenine and the tethered carbonyl carbon, yielding nanangelenin B. The terminal T3 domain enhances the catalytic efficiency of C2, suggesting the T2-tethered Ant-L-Kyn is transferred to T3 prior to cyclization by C2. Once released from nanA, nanangelenin B is then prenylated by the prenyltransferase nanD to form nanangelenin C. Nanangelenin C is then N-hydroxylated by the FAD-dependent monooxygenase nanF and further acetylated by the acetyltransferase nanB to yield nanangelenin F. Finally, the N-methyltransferase nanE methylates the amide nitrogen of 1-benzazepine to convert nanangelenin F into nanangelenin A. NanE is also able to methylate most of the intermediates of the pathway such as nanangelenin B and nanangelenin C to produce nanangelenin D and nanangelenin E, respectively. This is Prenyltransferase nanD from Aspergillus nanangensis.